Consider the following 212-residue polypeptide: Pyridoxine/pyridoxamine 5'-phosphate oxidase (212 aa).

Residues 8-11 and Lys66 contribute to the substrate site; that span reads RKNY. FMN contacts are provided by residues 61–66, 76–77, Arg82, Lys83, and Gln105; these read RIVLIK and FT. Tyr123, Arg127, and Ser131 together coordinate substrate. FMN contacts are provided by residues 140–141 and Trp184; that span reads QS. 190–192 lines the substrate pocket; the sequence is RLH. Arg194 contacts FMN.

Belongs to the pyridoxamine 5'-phosphate oxidase family. Homodimer. Requires FMN as cofactor.

It carries out the reaction pyridoxamine 5'-phosphate + O2 + H2O = pyridoxal 5'-phosphate + H2O2 + NH4(+). It catalyses the reaction pyridoxine 5'-phosphate + O2 = pyridoxal 5'-phosphate + H2O2. The protein operates within cofactor metabolism; pyridoxal 5'-phosphate salvage; pyridoxal 5'-phosphate from pyridoxamine 5'-phosphate: step 1/1. It functions in the pathway cofactor metabolism; pyridoxal 5'-phosphate salvage; pyridoxal 5'-phosphate from pyridoxine 5'-phosphate: step 1/1. Functionally, catalyzes the oxidation of either pyridoxine 5'-phosphate (PNP) or pyridoxamine 5'-phosphate (PMP) into pyridoxal 5'-phosphate (PLP). This chain is Pyridoxine/pyridoxamine 5'-phosphate oxidase, found in Paraburkholderia phymatum (strain DSM 17167 / CIP 108236 / LMG 21445 / STM815) (Burkholderia phymatum).